The sequence spans 379 residues: Cobalt-precorrin-5B C(1)-methyltransferase (379 aa).

Belongs to the CbiD family.

It carries out the reaction Co-precorrin-5B + S-adenosyl-L-methionine = Co-precorrin-6A + S-adenosyl-L-homocysteine. The protein operates within cofactor biosynthesis; adenosylcobalamin biosynthesis; cob(II)yrinate a,c-diamide from sirohydrochlorin (anaerobic route): step 6/10. Functionally, catalyzes the methylation of C-1 in cobalt-precorrin-5B to form cobalt-precorrin-6A. This is Cobalt-precorrin-5B C(1)-methyltransferase from Salmonella typhi.